Here is a 460-residue protein sequence, read N- to C-terminus: Cyclin-T1-2 (460 aa).

Disordered regions lie at residues 1–20 (MDEALNENASGSESDASSVA) and 285–345 (QPIS…QDHS). Basic and acidic residues predominate over residues 314–324 (SDDHSVHDGSR). Positions 332–345 (NSESEAQKNLQDHS) are enriched in polar residues.

The protein belongs to the cyclin family. Cyclin T subfamily.

This chain is Cyclin-T1-2 (CYCT1-2), found in Arabidopsis thaliana (Mouse-ear cress).